The following is a 702-amino-acid chain: Flagellar operon control protein UmoB (702 aa).

The next 5 helical transmembrane spans lie at 4–24 (SVIILAIFMISLFIMAAFLFF), 204–224 (GFWNGSLICLGLILWLTALMM), 227–247 (VFLPWIMAAGGTFLVLGLFLI), 343–363 (IIFVVCSLFIIGMLYLYQPLS), and 656–676 (GNTLLLFFAIGFLILNLFFII).

Belongs to the IgaA family.

Its subcellular location is the cell inner membrane. Functionally, up-regulator of flagellar flhDC master operon. The protein is Flagellar operon control protein UmoB (umoB) of Proteus mirabilis.